A 308-amino-acid polypeptide reads, in one-letter code: MADHTEVDLDSIIDRLLEVRGSRPGKQVQLLEAEIRYLCTKAREIFISQPILLELEAPIKICGDIHGQYYDLLRLFEYGGFPPEANYLFLGDYVDRGKQSLETICLLLAYKIKYPENFFILRGNHECASINRIYGFYDECKRRYNIKLWKTFTDCFNCLPIAAIIDEKIFTMHGGLSPDLNSMEQIRRVMRPTDIPDCGLLCDLLWSDPDKDITGWSENDRGVSFTFGPDVVSRFLQKHDMDLICRAHQVVEDGYEFFSKRQLVTLFSAPNYCGEFDNAGAMMSVDESLLCSFQILKPAEKKQKFGRR.

Residues D64, H66, D92, and N124 each contribute to the Mn(2+) site. The active-site Proton donor is H125. Residues H173 and H248 each contribute to the Mn(2+) site.

The protein belongs to the PPP phosphatase family. PP-1 subfamily. The cofactor is Mn(2+).

It is found in the cytoplasm. It catalyses the reaction O-phospho-L-seryl-[protein] + H2O = L-seryl-[protein] + phosphate. The catalysed reaction is O-phospho-L-threonyl-[protein] + H2O = L-threonyl-[protein] + phosphate. In Neurospora crassa (strain ATCC 24698 / 74-OR23-1A / CBS 708.71 / DSM 1257 / FGSC 987), this protein is Serine/threonine-protein phosphatase PP1 (pph-3).